Reading from the N-terminus, the 461-residue chain is Ribulose bisphosphate carboxylase (461 aa).

Asn112 is a binding site for substrate. The active-site Proton acceptor is the Lys167. Lys169 lines the substrate pocket. The Mg(2+) site is built by Lys192, Asp194, and Glu195. An N6-carboxylysine modification is found at Lys192. His288 functions as the Proton acceptor in the catalytic mechanism. 3 residues coordinate substrate: Arg289, His322, and Ser369.

This sequence belongs to the RuBisCO large chain family. Type II subfamily. As to quaternary structure, homodimer. It depends on Mg(2+) as a cofactor.

It catalyses the reaction 2 (2R)-3-phosphoglycerate + 2 H(+) = D-ribulose 1,5-bisphosphate + CO2 + H2O. The catalysed reaction is D-ribulose 1,5-bisphosphate + O2 = 2-phosphoglycolate + (2R)-3-phosphoglycerate + 2 H(+). In terms of biological role, ruBisCO catalyzes two reactions: the carboxylation of D-ribulose 1,5-bisphosphate, the primary event in carbon dioxide fixation, as well as the oxidative fragmentation of the pentose substrate. Both reactions occur simultaneously and in competition at the same active site. This chain is Ribulose bisphosphate carboxylase, found in Rhodopseudomonas palustris (strain BisB18).